A 483-amino-acid chain; its full sequence is Matrix metalloproteinase-20 (483 aa).

A signal peptide spans 1–22; that stretch reads MKVLPASGLAVLLVTALKFSAA. A propeptide spans 23–107 (activation peptide); sequence APSLFAATPR…PRCGVPDVAN (85 aa). The Cysteine switch signature appears at 98–105; the sequence is PRCGVPDV. A Zn(2+)-binding site is contributed by Cys100. 3 residues coordinate Ca(2+): Glu164, Ala165, and Asp166. The Zn(2+) site is built by His176 and Asp178. 4 residues coordinate Ca(2+): Asp183, Gly184, Arg186, and Thr188. His191 provides a ligand contact to Zn(2+). Positions 197, 198, 200, and 202 each coordinate Ca(2+). Position 204 (His204) interacts with Zn(2+). The Ca(2+) site is built by Asp206 and Glu209. His226 contacts Zn(2+). Residue Glu227 is part of the active site. Zn(2+) is bound by residues His230 and His236. Hemopexin repeat units follow at residues 293–343, 344–389, 391–439, and 440–483; these read PDIC…FPQL, MSNV…GFPR, VQRI…FSGV, and NGQI…WIGC. Cys296 and Cys483 are disulfide-bonded.

The protein belongs to the peptidase M10A family. Zn(2+) serves as cofactor. Ca(2+) is required as a cofactor. Autoactivates at least at the 107-Asn-|-Tyr-108 site. Expressed specifically in the enamel organ.

Its subcellular location is the secreted. The protein localises to the extracellular space. It is found in the extracellular matrix. In terms of biological role, degrades amelogenin, the major protein component of the enamel matrix and two of the macromolecules characterizing the cartilage extracellular matrix: aggrecan and the cartilage oligomeric matrix protein (COMP). May play a central role in tooth enamel formation. The chain is Matrix metalloproteinase-20 (MMP20) from Sus scrofa (Pig).